Here is a 43-residue protein sequence, read N- to C-terminus: Protein PsbN (43 aa).

A helical transmembrane segment spans residues 7–29 (VAIFLSGLLVSFTGYALYTAFGQ).

The protein belongs to the PsbN family.

Its subcellular location is the plastid. The protein localises to the chloroplast thylakoid membrane. Functionally, may play a role in photosystem I and II biogenesis. The polypeptide is Protein PsbN (Draba nemorosa (Woodland whitlowgrass)).